We begin with the raw amino-acid sequence, 329 residues long: tRNA-modifying protein YgfZ (329 aa).

Residues W27 and W189 each contribute to the folate site.

The protein belongs to the tRNA-modifying YgfZ family.

Its subcellular location is the cytoplasm. Folate-binding protein involved in regulating the level of ATP-DnaA and in the modification of some tRNAs. It is probably a key factor in regulatory networks that act via tRNA modification, such as initiation of chromosomal replication. The chain is tRNA-modifying protein YgfZ from Cronobacter sakazakii (strain ATCC BAA-894) (Enterobacter sakazakii).